Reading from the N-terminus, the 54-residue chain is Protein YmjE (54 aa).

This chain is Protein YmjE, found in Escherichia coli (strain K12).